Reading from the N-terminus, the 1024-residue chain is Translation initiation factor IF-2 (1024 aa).

A disordered region spans residues 33–425; it reads SHMSSLEDDT…GRVKKTKTMK (393 aa). Basic and acidic residues-rich tracts occupy residues 43 to 62, 135 to 148, 167 to 198, and 223 to 263; these read EARV…DTRV, TPED…ELKP, TPAK…KETS, and SKPD…KEVR. Polar residues predominate over residues 316-325; the sequence is EATQAPTSPQ. Positions 332-350 are enriched in basic and acidic residues; sequence KPADKGPARAQAHRPDTGR. Residues 365–375 show a composition bias toward basic residues; it reads RSKKKEWKKKG. The span at 394–406 shows a compositional bias: basic and acidic residues; the sequence is SVVEGKDLYEKGR. Positions 407 to 423 are enriched in basic residues; the sequence is SGKKGRRKDGRVKKTKT. Residues 518–687 form the tr-type G domain; that stretch reads SRPPVVTIMG…LLQSEVLELK (170 aa). A G1 region spans residues 527–534; that stretch reads GHVDHGKT. 527–534 contacts GTP; that stretch reads GHVDHGKT. The segment at 552-556 is G2; that stretch reads GITQH. The segment at 573-576 is G3; sequence DTPG. GTP contacts are provided by residues 573 to 577 and 627 to 630; these read DTPGH and NKMD. The segment at 627-630 is G4; sequence NKMD. The interval 663–665 is G5; the sequence is SAK.

Belongs to the TRAFAC class translation factor GTPase superfamily. Classic translation factor GTPase family. IF-2 subfamily.

It is found in the cytoplasm. In terms of biological role, one of the essential components for the initiation of protein synthesis. Protects formylmethionyl-tRNA from spontaneous hydrolysis and promotes its binding to the 30S ribosomal subunits. Also involved in the hydrolysis of GTP during the formation of the 70S ribosomal complex. The sequence is that of Translation initiation factor IF-2 from Desulforapulum autotrophicum (strain ATCC 43914 / DSM 3382 / VKM B-1955 / HRM2) (Desulfobacterium autotrophicum).